The chain runs to 118 residues: Large ribosomal subunit protein uL22 (118 aa).

The protein belongs to the universal ribosomal protein uL22 family. In terms of assembly, part of the 50S ribosomal subunit.

In terms of biological role, this protein binds specifically to 23S rRNA; its binding is stimulated by other ribosomal proteins, e.g. L4, L17, and L20. It is important during the early stages of 50S assembly. It makes multiple contacts with different domains of the 23S rRNA in the assembled 50S subunit and ribosome. Functionally, the globular domain of the protein is located near the polypeptide exit tunnel on the outside of the subunit, while an extended beta-hairpin is found that lines the wall of the exit tunnel in the center of the 70S ribosome. This chain is Large ribosomal subunit protein uL22, found in Pediococcus pentosaceus (strain ATCC 25745 / CCUG 21536 / LMG 10740 / 183-1w).